Reading from the N-terminus, the 156-residue chain is RNA polymerase sigma factor SigS (156 aa).

The Polymerase core binding signature appears at 29–44; that stretch reads EYYQLLLIKMWQLSQI. Residues 126–145 constitute a DNA-binding region (H-T-H motif); the sequence is QFEIAEIMSLSLSTIKLIKM.

The protein belongs to the sigma-70 factor family.

Sigma factors are initiation factors that promote the attachment of RNA polymerase to specific initiation sites and are then released. Sigma-S contributes to the protection against external stress, thus playing a role in cellular fitness and survival. The chain is RNA polymerase sigma factor SigS (sigS) from Staphylococcus aureus (strain Mu50 / ATCC 700699).